We begin with the raw amino-acid sequence, 255 residues long: GTP cyclohydrolase III (255 aa).

The protein belongs to the archaeal-type GTP cyclohydrolase family.

It catalyses the reaction GTP + 3 H2O = 2-amino-5-formylamino-6-(5-phospho-D-ribosylamino)pyrimidin-4(3H)-one + 2 phosphate + 2 H(+). Functionally, catalyzes the formation of 2-amino-5-formylamino-6-ribofuranosylamino-4(3H)-pyrimidinone ribonucleotide monophosphate and inorganic phosphate from GTP. Also has an independent pyrophosphate phosphohydrolase activity. The protein is GTP cyclohydrolase III of Methanosphaera stadtmanae (strain ATCC 43021 / DSM 3091 / JCM 11832 / MCB-3).